Reading from the N-terminus, the 260-residue chain is Protein SVS1 (260 aa).

The signal sequence occupies residues 1-19 (MIFKILCSLLLVTSNFASA). 3 N-linked (GlcNAc...) asparagine glycosylation sites follow: asparagine 23, asparagine 249, and asparagine 256.

Required for vanadate resistance. The protein is Protein SVS1 (SVS1) of Saccharomyces cerevisiae (strain ATCC 204508 / S288c) (Baker's yeast).